A 616-amino-acid chain; its full sequence is Chaperone protein HscA (616 aa).

Belongs to the heat shock protein 70 family.

Functionally, chaperone involved in the maturation of iron-sulfur cluster-containing proteins. Has a low intrinsic ATPase activity which is markedly stimulated by HscB. Involved in the maturation of IscU. In Photorhabdus laumondii subsp. laumondii (strain DSM 15139 / CIP 105565 / TT01) (Photorhabdus luminescens subsp. laumondii), this protein is Chaperone protein HscA.